The primary structure comprises 298 residues: Oxidoreductase YdhF (298 aa).

Y55 acts as the Proton donor in catalysis. NADP(+) contacts are provided by residues S158 to N159, W209 to D220, and S263 to G264.

This sequence belongs to the aldo/keto reductase family. Aldo/keto reductase 2 subfamily.

In terms of biological role, may function as oxidoreductase. The sequence is that of Oxidoreductase YdhF (ydhF) from Escherichia coli (strain K12).